We begin with the raw amino-acid sequence, 272 residues long: Shikimate dehydrogenase (NADP(+)) (272 aa).

Shikimate is bound by residues 14–16 (SKS) and Thr-61. Lys-65 functions as the Proton acceptor in the catalytic mechanism. Glu-77 contributes to the NADP(+) binding site. 2 residues coordinate shikimate: Asn-86 and Asp-102. Residues 126-130 (GAGGA), 149-154 (NRTQEK), and Met-213 each bind NADP(+). Tyr-215 contributes to the shikimate binding site. Gly-237 provides a ligand contact to NADP(+).

It belongs to the shikimate dehydrogenase family. Homodimer.

The catalysed reaction is shikimate + NADP(+) = 3-dehydroshikimate + NADPH + H(+). It participates in metabolic intermediate biosynthesis; chorismate biosynthesis; chorismate from D-erythrose 4-phosphate and phosphoenolpyruvate: step 4/7. Its function is as follows. Involved in the biosynthesis of the chorismate, which leads to the biosynthesis of aromatic amino acids. Catalyzes the reversible NADPH linked reduction of 3-dehydroshikimate (DHSA) to yield shikimate (SA). This chain is Shikimate dehydrogenase (NADP(+)), found in Erwinia tasmaniensis (strain DSM 17950 / CFBP 7177 / CIP 109463 / NCPPB 4357 / Et1/99).